The sequence spans 163 residues: Retinoic acid receptor responder protein 2 (163 aa).

Positions 1-20 (MKYLLISLALWLGMVGIHGT) are cleaved as a signal peptide. Intrachain disulfides connect cysteine 79-cysteine 89, cysteine 100-cysteine 119, and cysteine 103-cysteine 135. Residues 158–163 (RALKHK) constitute a propeptide that is removed on maturation.

In terms of processing, secreted in an inactive precursor form, prochemerin, which is proteolytically processed by a variety of extracellular proteases to generate forms with differing levels of bioactivity. For example, the removal of six amino acids results in chemerin-157, which exhibits the highest activity, while removal of seven amino acids results in chemerin-156 which has slightly less activity. Some proteases are able to cleave at more than one site and chemerin forms may be sequentially processed by different enzymes to modulate activity levels. The coordinated expression and activity of chemerin-modifying enzymes is essential for regulating its bioactivation, inactivation and, consequently, biological function. Cathepsin G cleaves seven C-terminal amino acids from prochemerin (chemerin-156), elastase is able to cleave six (chemerin-157), eight (chemerin-155) or eleven (chemerin-152), plasmin cleaves five amino acids (chemerin-158), and tryptase cleaves five (chemerin-158) or eight (chemerin-155). Multiple cleavages might be required to fully activate chemerin, with an initial tryptase cleavage resulting in chemerin with low activity (chemerin-158), and a second cleavage by carboxypeptidase N or B producing highly active chemerin (chemerin-157).

Its subcellular location is the secreted. Functionally, adipocyte-secreted protein (adipokine) that regulates adipogenesis, metabolism and inflammation through activation of the chemokine-like receptor 1 (CMKLR1). Also acts as a ligand for CMKLR2. Can also bind to C-C chemokine receptor-like 2 (CCRL2), but with a lower affinity than it does to CMKLR1 or CMKLR2. Positively regulates adipocyte differentiation, modulates the expression of adipocyte genes involved in lipid and glucose metabolism and might play a role in angiogenesis, a process essential for the expansion of white adipose tissue. Also acts as a pro-inflammatory adipokine, causing an increase in secretion of pro-inflammatory and prodiabetic adipokines, which further impair adipose tissue metabolic function and have negative systemic effects including impaired insulin sensitivity, altered glucose and lipid metabolism, and a decrease in vascular function in other tissues. Can have both pro- and anti-inflammatory properties depending on the modality of enzymatic cleavage by different classes of proteases. Acts as a chemotactic factor for leukocyte populations expressing CMKLR1, particularly immature plasmacytoid dendritic cells, but also immature myeloid DCs, macrophages and natural killer cells. Exerts an anti-inflammatory role by preventing TNF/TNFA-induced VCAM1 expression and monocytes adhesion in vascular endothelial cells. The effect is mediated via inhibiting activation of NF-kappa-B and CRK/p38 through stimulation of AKT1/NOS3 signaling and nitric oxide production. Its dual role in inflammation and metabolism might provide a link Exhibits an antimicrobial function in the skin. The protein is Retinoic acid receptor responder protein 2 (RARRES2) of Cricetulus griseus (Chinese hamster).